The chain runs to 299 residues: GTPase Era (299 aa).

In terms of domain architecture, Era-type G spans 9 to 177 (RSGSVAVIGR…VGDLLKLVPE (169 aa)). The interval 17-24 (GRPNVGKS) is G1. 17–24 (GRPNVGKS) serves as a coordination point for GTP. Residues 43 to 47 (QTTRH) form a G2 region. The tract at residues 64 to 67 (DTPG) is G3. GTP contacts are provided by residues 64–68 (DTPGL) and 126–129 (NKVD). Positions 126–129 (NKVD) are G4. The tract at residues 156 to 158 (VSA) is G5. Residues 200 to 284 (VREQLMRQLG…FLETWVRVRE (85 aa)) enclose the KH type-2 domain.

This sequence belongs to the TRAFAC class TrmE-Era-EngA-EngB-Septin-like GTPase superfamily. Era GTPase family. Monomer.

The protein resides in the cytoplasm. The protein localises to the cell inner membrane. In terms of biological role, an essential GTPase that binds both GDP and GTP, with rapid nucleotide exchange. Plays a role in 16S rRNA processing and 30S ribosomal subunit biogenesis and possibly also in cell cycle regulation and energy metabolism. This is GTPase Era from Xanthomonas axonopodis pv. citri (strain 306).